The primary structure comprises 232 residues: A-type ATP synthase subunit D (232 aa).

Positions 200–232 (KKIKNKKEAEEEDEDEDESEMTDETVVQTPADD) are disordered. A compositionally biased stretch (acidic residues) spans 209–222 (EEEDEDEDESEMTD).

This sequence belongs to the V-ATPase D subunit family. In terms of assembly, has multiple subunits with at least A(3), B(3), C, D, E, F, H, I and proteolipid K(x).

It localises to the cell membrane. Component of the A-type ATP synthase that produces ATP from ADP in the presence of a proton gradient across the membrane. This Haloquadratum walsbyi (strain DSM 16790 / HBSQ001) protein is A-type ATP synthase subunit D.